The chain runs to 792 residues: Glucocorticoid receptor (792 aa).

The span at 1 to 15 (MDSKESLAPPGRDEV) shows a compositional bias: basic and acidic residues. Residues 1-25 (MDSKESLAPPGRDEVPSSLLGRGRG) form a disordered region. The tract at residues 1 to 436 (MDSKESLAPP…STATGPPPKL (436 aa)) is modulating. Arg-24 carries the omega-N-methylarginine modification. Phosphoserine is present on Ser-46. Residues 67 to 98 (SKGSASNAQQQQQQQQQQQQQQQQQPQPDLSK) are disordered. Positions 75 to 94 (QQQQQQQQQQQQQQQQQPQP) are enriched in low complexity. A phosphoserine mark is found at Ser-131, Ser-152, and Ser-159. Residues 148–162 (NRSTSRPENPKSSTP) show a composition bias toward polar residues. Positions 148–201 (NRSTSRPENPKSSTPAAGCATPTEKEFPQTHSDPSSEQQNRKSQPGTNGGSVKL) are disordered. Thr-168 bears the Phosphothreonine mark. The segment covering 176–193 (QTHSDPSSEQQNRKSQPG) has biased composition (polar residues). Phosphoserine is present on residues Ser-221, Ser-229, Ser-243, and Ser-284. Glycyl lysine isopeptide (Lys-Gly) (interchain with G-Cter in SUMO); alternate cross-links involve residues Lys-294 and Lys-310. Glycyl lysine isopeptide (Lys-Gly) (interchain with G-Cter in SUMO2); alternate cross-links involve residues Lys-294 and Lys-310. Phosphoserine is present on residues Ser-324 and Ser-421. A DNA-binding region (nuclear receptor) is located at residues 434-509 (PKLCLVCSDE…AGMNLEARKT (76 aa)). A Glycyl lysine isopeptide (Lys-Gly) (interchain with G-Cter in ubiquitin) cross-link involves residue Lys-435. NR C4-type zinc fingers lie at residues 437 to 457 (CLVC…CGSC) and 473 to 497 (CAGR…YRKC). Residues Lys-496, Lys-508, Lys-510, and Lys-511 each carry the N6-acetyllysine modification. The segment at 501–792 (GMNLEARKTK…NIKKLLFHQK (292 aa)) is interaction with CLOCK. Residues 503-538 (NLEARKTKKKIKGIQQATAGVSQDTSENANKTIVPA) are hinge. The NR LBD domain occupies 539 to 773 (ALPQLTPTLV…FPEMLAEIIT (235 aa)). The interval 547–712 (LVSLLEVIEP…EIRMTYIKEL (166 aa)) is interaction with CRY1. Lys-718 is covalently cross-linked (Glycyl lysine isopeptide (Lys-Gly) (interchain with G-Cter in SUMO)).

This sequence belongs to the nuclear hormone receptor family. NR3 subfamily. In terms of assembly, heteromultimeric cytoplasmic complex with HSP90AA1, HSPA1A/HSPA1B, and FKBP5 or another immunophilin such as PPID, STIP1, or the immunophilin homolog PPP5C. Upon ligand binding FKBP5 dissociates from the complex and FKBP4 takes its place, thereby linking the complex to dynein and mediating transport to the nucleus, where the complex dissociates. Probably forms a complex composed of chaperones HSP90 and HSP70, co-chaperones CDC37, PPP5C, TSC1 and client protein TSC2, CDK4, AKT, RAF1 and NR3C1; this complex does not contain co-chaperones STIP1/HOP and PTGES3/p23. Directly interacts with UNC45A. Binds to DNA as a homodimer, and as heterodimer with NR3C2 or the retinoid X receptor. Binds STAT5A and STAT5B homodimers and heterodimers. Interacts with NRIP1, POU2F1, POU2F2 and TRIM28. Interacts with several coactivator complexes, including the SMARCA4 complex, CREBBP/EP300, TADA2L (Ada complex) and p160 coactivators such as NCOA2 and NCOA6. Interaction with BAG1 inhibits transactivation. Interacts with HEXIM1 and TGFB1I1. Interacts with NCOA1. Interacts with NCOA3, SMARCA4, SMARCC1, SMARCD1, and SMARCE1. Interacts with CLOCK, CRY1 and CRY2 in a ligand-dependent fashion. Interacts with CIART. Interacts with RWDD3. Interacts with UBE2I/UBC9 and this interaction is enhanced in the presence of RWDD3. Interacts with GRIP1. Interacts with NR4A3 (via nuclear receptor DNA-binding domain), represses transcription activity of NR4A3 on the POMC promoter Nur response element (NurRE). Directly interacts with PNRC2 to attract and form a complex with UPF1 and DCP1A; the interaction leads to rapid mRNA degradation. Interacts with GSK3B. Interacts with FNIP1 and FNIP2. Interacts (via C-terminus) with HNRNPU (via C-terminus). Interacts with MCM3AP. Interacts (via domain NR LBD) with HSP90AA1 and HSP90AB1. In the absence of hormonal ligand, interacts with TACC1. Interacts (via NR LBD domain) with ZNF764 (via KRAB domain); the interaction regulates transcription factor activity of NR3C1 by directing its actions toward certain biologic pathways. In terms of processing, acetylation by CLOCK reduces its binding to glucocorticoid response elements and its transcriptional activity. Increased proteasome-mediated degradation in response to glucocorticoids. Post-translationally, phosphorylated in the absence of hormone; becomes hyperphosphorylated in the presence of glucocorticoids. Phosphorylated in the absence of hormone; becomes hyperphosphorylated in the presence of glucocorticoid. The Ser-221, Ser-243 and Ser-421-phosphorylated forms are mainly cytoplasmic, and the Ser-229-phosphorylated form is nuclear. Phosphorylation at Ser-229 increases transcriptional activity. Phosphorylation at Ser-221, Ser-243 and Ser-421 decreases signaling capacity. Phosphorylation at Ser-421 may protect from glucocorticoid-induced apoptosis. Phosphorylation at Ser-221 and Ser-229 is not required in regulation of chromosome segregation. May be dephosphorylated by PPP5C, attenuates NR3C1 action. In terms of processing, sumoylation at Lys-294 and Lys-310 negatively regulates its transcriptional activity. Sumoylation at Lys-718 positively regulates its transcriptional activity in the presence of RWDD3. Sumoylation at Lys-294 and Lys-310 is dispensable whereas sumoylation at Lys-718 is critical for the stimulatory effect of RWDD3 on its transcriptional activity. Heat shock increases sumoylation in a RWDD3-dependent manner. Ubiquitinated. Ubiquitination by UBR5 leads to its degradation: UBR5 specifically recognizes and binds ligand-bound NR3C1 when it is not associated with coactivators (NCOAs). In presence of NCOAs, the UBR5-degron is not accessible, preventing its ubiquitination and degradation. Expressed in spleen, kidney and liver. Expressed in a circadian manner in the liver. As to expression, expressed at highest level in spleen with lesser amounts in kidney and liver.

The protein resides in the cytoplasm. It localises to the nucleus. The protein localises to the mitochondrion. It is found in the cytoskeleton. Its subcellular location is the spindle. The protein resides in the microtubule organizing center. It localises to the centrosome. The protein localises to the chromosome. It is found in the nucleoplasm. In terms of biological role, receptor for glucocorticoids (GC). Has a dual mode of action: as a transcription factor that binds to glucocorticoid response elements (GRE), both for nuclear and mitochondrial DNA, and as a modulator of other transcription factors. Affects inflammatory responses, cellular proliferation and differentiation in target tissues. Involved in chromatin remodeling. Plays a role in rapid mRNA degradation by binding to the 5' UTR of target mRNAs and interacting with PNRC2 in a ligand-dependent manner which recruits the RNA helicase UPF1 and the mRNA-decapping enzyme DCP1A, leading to RNA decay. Could act as a coactivator for STAT5-dependent transcription upon growth hormone (GH) stimulation and could reveal an essential role of hepatic GR in the control of body growth. Has transcriptional activation and repression activity. Mediates glucocorticoid-induced apoptosis. Promotes accurate chromosome segregation during mitosis. May act as a tumor suppressor. May play a negative role in adipogenesis through the regulation of lipolytic and antilipogenic gene expression. Its function is as follows. Acts as a dominant negative inhibitor of isoform 1. Has intrinsic transcriptional activity independent of isoform Alpha when both isoforms are coexpressed. Loses this transcription modulator function on its own. Has no hormone-binding activity. May play a role in controlling glucose metabolism by maintaining insulin sensitivity. Reduces hepatic gluconeogenesis through down-regulation of PEPCK in an isoform Alpha-dependent manner. Directly regulates STAT1 expression in isoform Alpha-independent manner. This Mus musculus (Mouse) protein is Glucocorticoid receptor (Nr3c1).